Consider the following 269-residue polypeptide: 3-methyl-2-oxobutanoate hydroxymethyltransferase (269 aa).

Mg(2+) is bound by residues Asp43 and Asp82. 3-methyl-2-oxobutanoate-binding positions include 43-44 (DS), Asp82, and Lys110. Glu112 contributes to the Mg(2+) binding site. Glu179 serves as the catalytic Proton acceptor.

It belongs to the PanB family. Homodecamer; pentamer of dimers. The cofactor is Mg(2+).

The protein resides in the cytoplasm. It catalyses the reaction 3-methyl-2-oxobutanoate + (6R)-5,10-methylene-5,6,7,8-tetrahydrofolate + H2O = 2-dehydropantoate + (6S)-5,6,7,8-tetrahydrofolate. Its pathway is cofactor biosynthesis; (R)-pantothenate biosynthesis; (R)-pantoate from 3-methyl-2-oxobutanoate: step 1/2. Its function is as follows. Catalyzes the reversible reaction in which hydroxymethyl group from 5,10-methylenetetrahydrofolate is transferred onto alpha-ketoisovalerate to form ketopantoate. This chain is 3-methyl-2-oxobutanoate hydroxymethyltransferase, found in Acinetobacter baumannii (strain SDF).